Here is a 306-residue protein sequence, read N- to C-terminus: Acetyl-coenzyme A carboxylase carboxyl transferase subunit beta (306 aa).

A CoA carboxyltransferase N-terminal domain is found at 25–294 (LWIKDPTSGE…AVNPSNPSPT (270 aa)). The disordered stretch occupies residues 286–306 (VNPSNPSPTDSQPPLSKAEAA). A compositionally biased stretch (polar residues) spans 287 to 299 (NPSNPSPTDSQPP).

The protein belongs to the AccD/PCCB family. As to quaternary structure, acetyl-CoA carboxylase is a heterohexamer composed of biotin carboxyl carrier protein (AccB), biotin carboxylase (AccC) and two subunits each of ACCase subunit alpha (AccA) and ACCase subunit beta (AccD).

The protein resides in the cytoplasm. It carries out the reaction N(6)-carboxybiotinyl-L-lysyl-[protein] + acetyl-CoA = N(6)-biotinyl-L-lysyl-[protein] + malonyl-CoA. It participates in lipid metabolism; malonyl-CoA biosynthesis; malonyl-CoA from acetyl-CoA: step 1/1. In terms of biological role, component of the acetyl coenzyme A carboxylase (ACC) complex. Biotin carboxylase (BC) catalyzes the carboxylation of biotin on its carrier protein (BCCP) and then the CO(2) group is transferred by the transcarboxylase to acetyl-CoA to form malonyl-CoA. In Bartonella quintana (strain Toulouse) (Rochalimaea quintana), this protein is Acetyl-coenzyme A carboxylase carboxyl transferase subunit beta.